Here is a 50-residue protein sequence, read N- to C-terminus: uncharacterized protein (50 aa).

Positions 1–22 are cleaved as a signal peptide; that stretch reads MSKVAALGWGTLVYLGVGLLLA.

This is an uncharacterized protein from Dictyostelium discoideum (Social amoeba).